The following is a 344-amino-acid chain: tRNA N6-adenosine threonylcarbamoyltransferase (344 aa).

Residues H112 and H116 each coordinate Fe cation. Substrate contacts are provided by residues 134-138, D167, G180, and N280; that span reads LASGG. D308 serves as a coordination point for Fe cation.

The protein belongs to the KAE1 / TsaD family. Fe(2+) is required as a cofactor.

The protein localises to the cytoplasm. It catalyses the reaction L-threonylcarbamoyladenylate + adenosine(37) in tRNA = N(6)-L-threonylcarbamoyladenosine(37) in tRNA + AMP + H(+). Required for the formation of a threonylcarbamoyl group on adenosine at position 37 (t(6)A37) in tRNAs that read codons beginning with adenine. Is involved in the transfer of the threonylcarbamoyl moiety of threonylcarbamoyl-AMP (TC-AMP) to the N6 group of A37, together with TsaE and TsaB. TsaD likely plays a direct catalytic role in this reaction. The protein is tRNA N6-adenosine threonylcarbamoyltransferase of Rickettsia rickettsii (strain Iowa).